A 2463-amino-acid chain; its full sequence is Protein TIC 214 (2463 aa).

Helical transmembrane passes span 18–38 (VGLYYGFISAFSIGSSYLFLL), 60–80 (FFTGQLLIFISILYGPLHLAL), 86–106 (ILLLLAPYFFFHYLFSNSGQW), 127–147 (LVFLNNLLFQLFSLSLLGRPM), 170–190 (FVGWLIGHILVLKWAGLVFVW), and 297–317 (LFSIILFAIFLLYLDQTPLLY). A coiled-coil region spans residues 326-441 (QLQRKLSNET…AARAMQEAYK (116 aa)). Disordered stretches follow at residues 792–841 (AVPK…RKVN), 1230–1249 (SIQKDPKKEKDPKKEKGPKK), 1393–1417 (SGGRETPEFTRSQKDIDNLKNEQDF), 2116–2136 (EEEKIEKEKRKKERKKEKLKK), and 2162–2187 (KQRAKNIARMEEEDKKARKKRKRKVQ). Residues 794-830 (PKKKKKISKSKQKNVKSKQKNVKSKQKNVKSKQKNVK) are compositionally biased toward basic residues. Composition is skewed to basic and acidic residues over residues 832-841 (KQNEIKRKVN), 1231-1249 (IQKDPKKEKDPKKEKGPKK), and 1397-1417 (ETPEFTRSQKDIDNLKNEQDF). Positions 2049–2192 (WDALVASLKQ…KRKVQVQENK (144 aa)) form a coiled coil. Residues 2124 to 2136 (KRKKERKKEKLKK) show a composition bias toward basic residues.

Belongs to the TIC214 family. In terms of assembly, part of the Tic complex.

The protein localises to the plastid. The protein resides in the chloroplast inner membrane. Functionally, involved in protein precursor import into chloroplasts. May be part of an intermediate translocation complex acting as a protein-conducting channel at the inner envelope. This is Protein TIC 214 from Oenothera elata subsp. hookeri (Hooker's evening primrose).